Reading from the N-terminus, the 419-residue chain is Epothilone C/D epoxidase (419 aa).

The substrate site is built by alanine 180 and glycine 304. Cysteine 365 is a binding site for heme.

Belongs to the cytochrome P450 family. Heme is required as a cofactor.

The catalysed reaction is epothilone C + 2 reduced [2Fe-2S]-[ferredoxin] + O2 + 2 H(+) = epothilone A + 2 oxidized [2Fe-2S]-[ferredoxin] + H2O. It carries out the reaction epothilone D + 2 reduced [2Fe-2S]-[ferredoxin] + O2 + 2 H(+) = epothilone B + 2 oxidized [2Fe-2S]-[ferredoxin] + H2O. It functions in the pathway secondary metabolite biosynthesis; epothilone biosynthesis. In terms of biological role, involved in the biosynthesis of epothilones, macrolactones which have a narrow anti-fungal spectrum and microtubule-stabilizing activity. Catalyzes the epoxidation of epothilones C and D to epothilones A and B, respectively. This Sorangium cellulosum (Polyangium cellulosum) protein is Epothilone C/D epoxidase (cyp167A1).